The sequence spans 537 residues: uncharacterized protein (537 aa).

This is an uncharacterized protein from Mycobacterium bovis (strain ATCC BAA-935 / AF2122/97).